Consider the following 158-residue polypeptide: Transcription factor HY5 (158 aa).

Over residues 1–25 the composition is skewed to low complexity; it reads MQEQATSSIAASSLPSSSERSSSSA. The interval 1–105 is disordered; sequence MQEQATSSIA…NRVSAQQARE (105 aa). The span at 26 to 44 shows a compositional bias: basic and acidic residues; sequence LHHELKEGMESDDEIRRVP. The interaction with COP1 stretch occupies residues 35 to 46; it reads ESDDEIRRVPEM. The span at 47–58 shows a compositional bias: low complexity; the sequence is GGEATGTTSASG. The bZIP domain maps to 86–149; sequence ENKRLKRLLR…QMLRHILKNT (64 aa). The interval 88–108 is basic motif; it reads KRLKRLLRNRVSAQQARERKK. The segment at 114–142 is leucine-zipper; that stretch reads LEARVKELETKNAELEERLSTLQNENQML.

The protein belongs to the bZIP family. As to quaternary structure, interacts with COP1. Post-translationally, ubiquitinated by COP1. Ubiquitination takes place in darkness and leads to its subsequent degradation, thereby preventing to activate photomorphogenesis signals.

The protein resides in the nucleus. Functionally, transcription factor that promotes photomorphogenesis in the light and positively regulates fruit pigmentation and fruit nutritional quality. Probably acts downstream of the light receptor network and directly affects transcription of light-induced genes. This Solanum lycopersicum (Tomato) protein is Transcription factor HY5 (HY5).